The primary structure comprises 352 residues: Bifunctional protein FolD 1, mitochondrial (352 aa).

A mitochondrion-targeting transit peptide spans 1–23; it reads MLMIARKALASAHTKAFRLATRD.

Belongs to the tetrahydrofolate dehydrogenase/cyclohydrolase family. As to quaternary structure, homodimer.

The protein localises to the mitochondrion. The catalysed reaction is (6R)-5,10-methylene-5,6,7,8-tetrahydrofolate + NADP(+) = (6R)-5,10-methenyltetrahydrofolate + NADPH. It catalyses the reaction (6R)-5,10-methenyltetrahydrofolate + H2O = (6R)-10-formyltetrahydrofolate + H(+). Its pathway is one-carbon metabolism; tetrahydrofolate interconversion. Catalyzes the oxidation of 5,10-methylenetetrahydrofolate to 5,10-methenyltetrahydrofolate and then the hydrolysis of 5,10-methenyltetrahydrofolate to 10-formyltetrahydrofolate. This chain is Bifunctional protein FolD 1, mitochondrial (FOLD1), found in Arabidopsis thaliana (Mouse-ear cress).